The chain runs to 415 residues: Gamma-glutamyl phosphate reductase (415 aa).

The protein belongs to the gamma-glutamyl phosphate reductase family.

The protein localises to the cytoplasm. It carries out the reaction L-glutamate 5-semialdehyde + phosphate + NADP(+) = L-glutamyl 5-phosphate + NADPH + H(+). Its pathway is amino-acid biosynthesis; L-proline biosynthesis; L-glutamate 5-semialdehyde from L-glutamate: step 2/2. Catalyzes the NADPH-dependent reduction of L-glutamate 5-phosphate into L-glutamate 5-semialdehyde and phosphate. The product spontaneously undergoes cyclization to form 1-pyrroline-5-carboxylate. This Listeria monocytogenes serotype 4b (strain F2365) protein is Gamma-glutamyl phosphate reductase.